A 623-amino-acid chain; its full sequence is MLALDSSRQQQTSYFQDVHMDPALVDPFGFQMDNLGGFGQTSGPTSAPTSYYGTSPVYADSQLEPKTSAFPPMPPTPPSLPVPYSTEPYMSGLSSASGPSIASASSSAIGSPYSCTAHTFPESWVDTNHGIGLPAAVMDEFFPNEFMGSSLEADHTYQRKGPDDFVEHSNFSANCGFFLQSPDQSHLPVAENYSADHLSQTGLAVSSPMPNSGPHSRSVSIYDRRSSISSTNSRRSQLSPAASVADFDEESKEKGRCPHPDCGRVFKDLKAHMLTHQSERPEKCPIVTCEYHVKGFARKYDKNRHTLTHYKGTMVCGFCPGSGSPAEKSFNRADVFKRHLTSVHGVEQTPPNCRKRSPGASSVKKVSDYCQDATGKCSTCSATFSNAQDFYEHLDDCVLRVVQQVEPSEVINQQRLAEVDCDEEVKKTMEKHKLLDAAGDVDDEPEEDDDDYNELNLQLRSSKGAFKSNKANSSLGSRPIMGNHNAVTKNGKARATISKRRNNRDRYPPSWGCPSSSMKTKKRVLCVFDGQRRLWKDEMMLDNEFEVRLKLPGGAGDGTNREAYITDLDVETLKRAEGVLSANEDEKGPWLEGPATHFMGQPAKMLPALSHTHEDVDIDDLMS.

Residues 202–219 are compositionally biased toward polar residues; that stretch reads GLAVSSPMPNSGPHSRSV. Disordered regions lie at residues 202-256 and 468-493; these read GLAV…EKGR and SNKA…NGKA. Residues 227 to 239 are compositionally biased toward low complexity; it reads SISSTNSRRSQLS. Residues 255–276 form a C2H2-type zinc finger; it reads GRCPHPDCGRVFKDLKAHMLTH.

The protein localises to the nucleus. Functionally, transcription factor involved in fungal growth and virulence potential. Negatively regulates antifungal drug susceptibility via transcriptional inhibition of the expressions of drug efflux pumps in a crzA-dependent way. Under the treatment of azoles, both zfpA and crzA transfer to nuclei and coregulate the expression of multidrug transporters and then keep normal drug susceptibility in fungal cells. In Aspergillus fumigatus (strain CBS 144.89 / FGSC A1163 / CEA10) (Neosartorya fumigata), this protein is C2H2-type transcription factor zfpA.